The chain runs to 272 residues: NH(3)-dependent NAD(+) synthetase (272 aa).

45 to 52 (GISGGQDS) lines the ATP pocket. D51 serves as a coordination point for Mg(2+). Deamido-NAD(+) is bound at residue R138. T158 contacts ATP. Residue E163 coordinates Mg(2+). Positions 171 and 178 each coordinate deamido-NAD(+). Residues K187 and T209 each coordinate ATP. Position 258–259 (258–259 (HK)) interacts with deamido-NAD(+).

The protein belongs to the NAD synthetase family. As to quaternary structure, homodimer.

The catalysed reaction is deamido-NAD(+) + NH4(+) + ATP = AMP + diphosphate + NAD(+) + H(+). It participates in cofactor biosynthesis; NAD(+) biosynthesis; NAD(+) from deamido-NAD(+) (ammonia route): step 1/1. Catalyzes the ATP-dependent amidation of deamido-NAD to form NAD. Uses ammonia as a nitrogen source. In Bacillus cereus (strain G9842), this protein is NH(3)-dependent NAD(+) synthetase.